Consider the following 337-residue polypeptide: Heat-inducible transcription repressor HrcA (337 aa).

The protein belongs to the HrcA family.

In terms of biological role, negative regulator of class I heat shock genes (grpE-dnaK-dnaJ and groELS operons). Prevents heat-shock induction of these operons. In Arthrobacter sp. (strain FB24), this protein is Heat-inducible transcription repressor HrcA.